The primary structure comprises 807 residues: Spondin-1 (807 aa).

An N-terminal signal peptide occupies residues 1 to 28; sequence MRLSPVSLRLSRGPALLALALPLAAALA. One can recognise a Reelin domain in the interval 29-194; the sequence is FSDETLDKVT…DPTLDGVTDR (166 aa). 17 disulfides stabilise this stretch: Cys-44–Cys-128, Cys-156–Cys-182, Cys-199–Cys-336, Cys-200–Cys-340, Cys-202–Cys-415, Cys-443–Cys-480, Cys-454–Cys-489, Cys-459–Cys-494, Cys-502–Cys-538, Cys-513–Cys-517, Cys-548–Cys-554, Cys-559–Cys-595, Cys-570–Cys-574, Cys-605–Cys-610, Cys-615–Cys-650, Cys-626–Cys-630, and Cys-660–Cys-665. A Spondin domain is found at 195–388; it reads PILDCCACGT…LTSLDHPQSP (194 aa). N-linked (GlcNAc...) asparagine glycosylation occurs at Asn-214. Residues Asp-325, Asp-354, and Asp-358 each contribute to the Ca(2+) site. 5 consecutive TSP type-1 domains span residues 442–495, 501–555, 558–611, 614–666, and 668–721; these read TCIY…PGCS, TCTM…EECS, SCLV…PECH, PCLL…PECP, and DCEL…RKCL. Asn-681 carries an N-linked (GlcNAc...) asparagine glycan. Residues 732-746 show a composition bias toward basic and acidic residues; the sequence is REARESRRSEQLREE. The interval 732–752 is disordered; that stretch reads REARESRRSEQLREESDGEQF. A TSP type-1 6 domain is found at 754 to 806; sequence GCRMRPWTAWSECTKLCGGGIQERYMTVKKRFKSSQFTSCKDKKEIRACNVHP.

As to quaternary structure, binds to the central extracellular domain of APP and inhibits beta-secretase cleavage of APP.

Its subcellular location is the secreted. It localises to the extracellular space. It is found in the extracellular matrix. Its function is as follows. Cell adhesion protein that promotes the attachment of spinal cord and sensory neuron cells and the outgrowth of neurites in vitro. May contribute to the growth and guidance of axons in both the spinal cord and the PNS. The protein is Spondin-1 (Spon1) of Mus musculus (Mouse).